The chain runs to 448 residues: UPF0210 protein Pars_1033 (448 aa).

It belongs to the UPF0210 family.

The polypeptide is UPF0210 protein Pars_1033 (Pyrobaculum arsenaticum (strain DSM 13514 / JCM 11321 / PZ6)).